The chain runs to 795 residues: Lon protease 1 (795 aa).

One can recognise a Lon N-terminal domain in the interval 9-204 (LPVLPLRNTV…RVLALLLRDL (196 aa)). 360–367 (GPPGVGKT) contacts ATP. Positions 596–777 (EPQVGAAQGL…GEVLKLLLLP (182 aa)) constitute a Lon proteolytic domain. Catalysis depends on residues Ser683 and Lys726.

It belongs to the peptidase S16 family. As to quaternary structure, homohexamer. Organized in a ring with a central cavity.

The protein resides in the cytoplasm. It catalyses the reaction Hydrolysis of proteins in presence of ATP.. In terms of biological role, ATP-dependent serine protease that mediates the selective degradation of mutant and abnormal proteins as well as certain short-lived regulatory proteins. Required for cellular homeostasis and for survival from DNA damage and developmental changes induced by stress. Degrades polypeptides processively to yield small peptide fragments that are 5 to 10 amino acids long. Binds to DNA in a double-stranded, site-specific manner. This chain is Lon protease 1, found in Thermus thermophilus (strain ATCC BAA-163 / DSM 7039 / HB27).